The chain runs to 335 residues: MKYIKSPTMALAMSTLIMSTLMAVSSANWMFLWGAMELNLLSFIPIMMQSNNNQETEGAVKYFLAQALGSALLLMSSTSMWMTFSMISNFMPLTLMAAIMLKLGSVPCHFWYPSVMASISWVSCLILSSWQKLAPLSILAFLLPQKNMNFMLSMAAMNALLGGVIGMNQTQLRTIMAYSSIGHIGWMMSLAAVYKPSSCIMYFVVYCILITPLFMTMGYLNMFSTKHMSKLSSYSSTVHMALLMVLLSLGGLPPFTGFMPKLMTIMLLMQSMKIILLILIAGSIMNLFFYLNIIISSMPLPPHLKNVDSTDIKCSLKFVIPICTLSLGLSPFIML.

11 helical membrane-spanning segments follow: residues 7–27 (PTMA…VSSA), 28–48 (NWMF…PIMM), 58–78 (GAVK…MSST), 81–101 (WMTF…AIML), 110–130 (FWYP…LSSW), 147–167 (NMNF…VIGM), 174–194 (TIMA…AAVY), 200–220 (IMYF…MGYL), 240–260 (MALL…GFMP), 274–294 (IILL…LNII), and 315–335 (SLKF…FIML).

Belongs to the complex I subunit 2 family.

The protein resides in the mitochondrion inner membrane. The catalysed reaction is a ubiquinone + NADH + 5 H(+)(in) = a ubiquinol + NAD(+) + 4 H(+)(out). Functionally, core subunit of the mitochondrial membrane respiratory chain NADH dehydrogenase (Complex I) that is believed to belong to the minimal assembly required for catalysis. Complex I functions in the transfer of electrons from NADH to the respiratory chain. The immediate electron acceptor for the enzyme is believed to be ubiquinone. The polypeptide is NADH-ubiquinone oxidoreductase chain 2 (ND2) (Lumbricus terrestris (Common earthworm)).